The primary structure comprises 532 residues: Probable inorganic phosphate transporter 1-9 (532 aa).

The Cytoplasmic segment spans residues 1–22 (MPELSLLSALDAARIQWYHFKA). The chain crosses the membrane as a helical span at residues 23–43 (IIVAGMGLFTDAYDLFCIAPI). Topologically, residues 44-62 (MKMISQIYYHKDSIGTALL) are extracellular. The chain crosses the membrane as a helical span at residues 63–83 (STSYAIALLGTALGQLIFGYL). The Cytoplasmic portion of the chain corresponds to 84–91 (GDRVGRRK). The chain crosses the membrane as a helical span at residues 92–112 (VYGLSLLIMVFSSFGCGFSVC). Over 113–124 (TTRRSCVMVSLG) the chain is Extracellular. Residues 125 to 145 (FFRFVLGLGIGGDYPLSATIM) traverse the membrane as a helical segment. At 146–154 (SEFANKRTR) the chain is on the cytoplasmic side. A helical transmembrane segment spans residues 155 to 175 (GAFIAAVFSMQGLGILMSSAV). At 176 to 207 (TMVVCLAFKNAGEGSSEKTNVAGLETLAPPES) the chain is on the extracellular side. The helical transmembrane segment at 208–228 (DIAWRLILMIGALPAALTFYW) threads the bilayer. Residues 229 to 292 (RMLMPETARY…KLFSRRFLSL (64 aa)) lie on the Cytoplasmic side of the membrane. A helical membrane pass occupies residues 293 to 313 (HGRDLFAASANWFLVDVVFYT). The Extracellular segment spans residues 314-343 (SNLLLSQIFNFSNKPLNSTNVYDSAFEVAK). A helical transmembrane segment spans residues 344 to 364 (LAAIVAACSTIPGYWFTVYFI). The Cytoplasmic portion of the chain corresponds to 365–371 (DKIGRVK). A helical transmembrane segment spans residues 372–392 (IQMMGFFLMAVVYLVAGIPYS). At 393–406 (WYWSKHEKTNKGFM) the chain is on the extracellular side. A helical membrane pass occupies residues 407–427 (VLYGLIFFFSNFGPNTTTFII). Topologically, residues 428–441 (PAELFPARFRSTCH) are cytoplasmic. Residues 442–462 (GISGAAGKFGAIVGTVGFLWA) form a helical membrane-spanning segment. Residues 463–478 (TRHHEEDGFPDVKRVR) are Extracellular-facing. A helical membrane pass occupies residues 479–499 (IAFLILGGVCIAGMIVTYLFT). Residues 500–532 (RETMGRSLEENEDEIVSTSAGSSPANELLRRQY) are Cytoplasmic-facing. Residues 509–532 (ENEDEIVSTSAGSSPANELLRRQY) form a disordered region. Residues 515 to 524 (VSTSAGSSPA) show a composition bias toward polar residues.

It belongs to the major facilitator superfamily. Phosphate:H(+) symporter (TC 2.A.1.9) family.

Its subcellular location is the membrane. Its function is as follows. High-affinity transporter for external inorganic phosphate. The chain is Probable inorganic phosphate transporter 1-9 (PHT1-9) from Arabidopsis thaliana (Mouse-ear cress).